We begin with the raw amino-acid sequence, 233 residues long: MAKLTKRMRVIREKVDVTKEYEINEAVALLQELATAKFVESVDVAVNLGIDARKSDQNVRGATVLPHGTGREIRVAVFTQGANAEAAKEAGADIVGMEDLAEQVKKGEMNFDVVVASPDAMRVVGQLGTILGPRGLMPNPKVGTVTPNVAEAVKNAKAGQVRYRNDKNGIIHTTIGKANFSAEQIKENLEALLVALKKAKPSSAKGTFLKKVSISTTMGAGVAVDQASLNTQA.

The protein belongs to the universal ribosomal protein uL1 family. Part of the 50S ribosomal subunit.

Its function is as follows. Binds directly to 23S rRNA. The L1 stalk is quite mobile in the ribosome, and is involved in E site tRNA release. Functionally, protein L1 is also a translational repressor protein, it controls the translation of the L11 operon by binding to its mRNA. In Vibrio campbellii (strain ATCC BAA-1116), this protein is Large ribosomal subunit protein uL1.